The chain runs to 328 residues: Nickel import system permease protein NikB (328 aa).

A run of 6 helical transmembrane segments spans residues 11-31 (LMQM…LMKL), 104-124 (LLIS…LGII), 139-159 (VIST…LLFI), 170-190 (ILSQ…AYII), 229-249 (ILPI…GTVV), and 279-299 (VLFI…LTLL). The ABC transmembrane type-1 domain maps to 100-297 (APITLLISFS…IINTIADLLT (198 aa)).

It belongs to the binding-protein-dependent transport system permease family. OppBC subfamily. As to quaternary structure, the complex is composed of two ATP-binding proteins (NikD and NikE), two transmembrane proteins (NikB and NikC) and a solute-binding protein (NikA).

The protein resides in the cell membrane. Its function is as follows. Part of the ABC transporter complex NikABCDE (Opp2) involved in nickel import. Probably responsible for the translocation of the substrate across the membrane. The chain is Nickel import system permease protein NikB from Staphylococcus aureus (strain bovine RF122 / ET3-1).